The chain runs to 251 residues: Gamma-interferon-inducible lysosomal thiol reductase (251 aa).

An N-terminal signal peptide occupies residues 1-21; sequence MFGFRLSVLLFAVCSLSACSC. In terms of domain architecture, Saposin A-type spans 22–60; the sequence is MFVNSCKYPPSQWCDSRDIAAQCGVLEQCMKFNASPVTV. Residues Cys68 and Cys71 are joined by a disulfide bond. A glycan (N-linked (GlcNAc...) asparagine) is linked at Asn108.

It belongs to the GILT family. In terms of assembly, dimer; disulfide-linked. Highly expressed in spleen and kidney. Also detected at lower levels in liver, heart, brain, intestine and gill.

It localises to the secreted. The protein localises to the lysosome. Functionally, lysosomal thiol reductase that can reduce protein disulfide bonds. May facilitate the complete unfolding of proteins destined for lysosomal degradation. Plays an important role in antigen processing. This is Gamma-interferon-inducible lysosomal thiol reductase from Carassius auratus (Goldfish).